Consider the following 181-residue polypeptide: MISLSFLIHNPLKKWKLKPSISINGYRSTFTMAFPCAQFRPCHCHATKDSLNTVADVRHCLTEYILWVSHRWTHRESAGSLYRLLISFRTDATELFGGELKDSLPWDNIDNCVEIIKCFIRNDSMKTAEELRAIIGLCTQSAIVSGRVFNDKYIDILLMLRKILNENDYLTLLDHIRTAKY.

This is Protein OPG005 (OPG005) from Vaccinia virus (strain Copenhagen) (VACV).